The following is a 149-amino-acid chain: MNADTAPFWRRKTLDQLDSKEWESLCDGCGLCCLQKLEDEEDNSVYYTSIACKLLDLQTCQCSDYPNRFKHVPDCIQLTPGKADQFKWLPPTCGYRLVSEGQDLPAWHHLVSGDRTQVHEQRISRSGRMLSENDVDEDDWEDHLIFRAG.

It belongs to the UPF0260 family.

The protein is UPF0260 protein PSEEN4031 of Pseudomonas entomophila (strain L48).